The chain runs to 507 residues: Glucose-6-phosphate isomerase (507 aa).

Glutamate 337 functions as the Proton donor in the catalytic mechanism. Catalysis depends on residues histidine 368 and lysine 478.

This sequence belongs to the GPI family.

The protein localises to the cytoplasm. The catalysed reaction is alpha-D-glucose 6-phosphate = beta-D-fructose 6-phosphate. The protein operates within carbohydrate biosynthesis; gluconeogenesis. It functions in the pathway carbohydrate degradation; glycolysis; D-glyceraldehyde 3-phosphate and glycerone phosphate from D-glucose: step 2/4. Its function is as follows. Catalyzes the reversible isomerization of glucose-6-phosphate to fructose-6-phosphate. This is Glucose-6-phosphate isomerase from Novosphingobium aromaticivorans (strain ATCC 700278 / DSM 12444 / CCUG 56034 / CIP 105152 / NBRC 16084 / F199).